A 545-amino-acid polypeptide reads, in one-letter code: CTP synthase (545 aa).

Residues 1–266 are amidoligase domain; it reads MTKNYIFITG…DDYICNYFKL (266 aa). Residue Ser14 coordinates CTP. A UTP-binding site is contributed by Ser14. ATP is bound by residues 15–20 and Asp72; that span reads SLGKGI. Residues Asp72 and Glu140 each coordinate Mg(2+). Residues 147-149, 187-192, and Lys223 contribute to the CTP site; these read DIE and KTKPTQ. Residues 187 to 192 and Lys223 each bind UTP; that span reads KTKPTQ. 239–241 contributes to the ATP binding site; the sequence is KDV. Residues 291 to 543 form the Glutamine amidotransferase type-1 domain; the sequence is VIGIIGKYIK…IKSAGKHKKN (253 aa). Gly352 is a binding site for L-glutamine. The active-site Nucleophile; for glutamine hydrolysis is Cys379. L-glutamine-binding positions include 380–383, Glu403, and Arg471; that span reads LGMQ. Catalysis depends on residues His516 and Glu518.

This sequence belongs to the CTP synthase family. Homotetramer.

It catalyses the reaction UTP + L-glutamine + ATP + H2O = CTP + L-glutamate + ADP + phosphate + 2 H(+). It carries out the reaction L-glutamine + H2O = L-glutamate + NH4(+). The enzyme catalyses UTP + NH4(+) + ATP = CTP + ADP + phosphate + 2 H(+). Its pathway is pyrimidine metabolism; CTP biosynthesis via de novo pathway; CTP from UDP: step 2/2. With respect to regulation, allosterically activated by GTP, when glutamine is the substrate; GTP has no effect on the reaction when ammonia is the substrate. The allosteric effector GTP functions by stabilizing the protein conformation that binds the tetrahedral intermediate(s) formed during glutamine hydrolysis. Inhibited by the product CTP, via allosteric rather than competitive inhibition. In terms of biological role, catalyzes the ATP-dependent amination of UTP to CTP with either L-glutamine or ammonia as the source of nitrogen. Regulates intracellular CTP levels through interactions with the four ribonucleotide triphosphates. The polypeptide is CTP synthase (Buchnera aphidicola subsp. Acyrthosiphon pisum (strain Tuc7)).